The primary structure comprises 258 residues: Chaperone protein caf1M (258 aa).

An N-terminal signal peptide occupies residues 1–20 (MILNRLSTLGIITFGMLSFA). Cys121 and Cys160 are oxidised to a cystine.

This sequence belongs to the periplasmic pilus chaperone family.

The protein localises to the periplasm. Its function is as follows. Has a stimulatory role for the envelope antigen F1 secretion. It seems to interact with the subunit polypeptide and to prevent it from digestion by a protease. The polypeptide is Chaperone protein caf1M (caf1M) (Yersinia pestis).